Here is a 20-residue protein sequence, read N- to C-terminus: Styelin-A (20 aa).

Hemocytes and pharyngeal tissues.

It is found in the secreted. Bactericidal against several Gram-positive and Gram-negative bacteria. The sequence is that of Styelin-A from Styela clava (Sea squirt).